The primary structure comprises 398 residues: Phosphopentomutase (398 aa).

Residues Asp-13, Asp-290, His-295, Asp-331, His-332, and His-343 each coordinate Mn(2+).

Belongs to the phosphopentomutase family. Mn(2+) serves as cofactor.

It is found in the cytoplasm. It carries out the reaction 2-deoxy-alpha-D-ribose 1-phosphate = 2-deoxy-D-ribose 5-phosphate. The catalysed reaction is alpha-D-ribose 1-phosphate = D-ribose 5-phosphate. It functions in the pathway carbohydrate degradation; 2-deoxy-D-ribose 1-phosphate degradation; D-glyceraldehyde 3-phosphate and acetaldehyde from 2-deoxy-alpha-D-ribose 1-phosphate: step 1/2. In terms of biological role, isomerase that catalyzes the conversion of deoxy-ribose 1-phosphate (dRib-1-P) and ribose 1-phosphate (Rib-1-P) to deoxy-ribose 5-phosphate (dRib-5-P) and ribose 5-phosphate (Rib-5-P), respectively. This Clostridium tetani (strain Massachusetts / E88) protein is Phosphopentomutase.